Here is a 275-residue protein sequence, read N- to C-terminus: Large ribosomal subunit protein uL2 (275 aa).

Disordered stretches follow at residues 222–243 (GSVM…PIGR) and 256–275 (GGKT…KRKP).

This sequence belongs to the universal ribosomal protein uL2 family. As to quaternary structure, part of the 50S ribosomal subunit. Forms a bridge to the 30S subunit in the 70S ribosome.

Functionally, one of the primary rRNA binding proteins. Required for association of the 30S and 50S subunits to form the 70S ribosome, for tRNA binding and peptide bond formation. It has been suggested to have peptidyltransferase activity; this is somewhat controversial. Makes several contacts with the 16S rRNA in the 70S ribosome. The protein is Large ribosomal subunit protein uL2 of Syntrophomonas wolfei subsp. wolfei (strain DSM 2245B / Goettingen).